A 99-amino-acid chain; its full sequence is Malonate decarboxylase acyl carrier protein (99 aa).

Ser25 is modified (O-(phosphoribosyl dephospho-coenzyme A)serine).

Belongs to the MdcC family. Post-translationally, covalently binds the prosthetic group of malonate decarboxylase.

The protein localises to the cytoplasm. In terms of biological role, subunit of malonate decarboxylase, it is an acyl carrier protein to which acetyl and malonyl thioester residues are bound via a 2'-(5''-phosphoribosyl)-3'-dephospho-CoA prosthetic group and turn over during the catalytic mechanism. The polypeptide is Malonate decarboxylase acyl carrier protein (Azotobacter vinelandii (strain DJ / ATCC BAA-1303)).